A 224-amino-acid chain; its full sequence is MASMGGLHGASPAVLEGSLKINGSSRLNGSGRVAVAQRSRLVVRAQQSEETSRRSVIGLVAAGLAGGSFVQAVLADAISIKVGPPPAPSGGLPAGTDNSDQARDFALALKDRFYLQPLPPTEAAARAKESAKDIINVKPLIDRKAWPYVQNDLRSKASYLRYDLNTIISSKPKDEKKSLKDLTTKLFDTIDNLDYAAKKKSPSQAEKYYAETVSALNEVLAKLG.

Residues 1 to 44 constitute a chloroplast transit peptide; sequence MASMGGLHGASPAVLEGSLKINGSSRLNGSGRVAVAQRSRLVVR. Residues 45–75 constitute a thylakoid transit peptide; sequence AQQSEETSRRSVIGLVAAGLAGGSFVQAVLA. Thr189 is modified (phosphothreonine). Tyr209 is modified (phosphotyrosine). A Phosphothreonine modification is found at Thr212.

Belongs to the PsbQ family. Expressed in green tissue, with high steady-state mRNA levels in leaves. Not expressed in roots.

It is found in the plastid. It localises to the chloroplast thylakoid membrane. Required for photosystem II assembly/stability and photoautotrophic growth under low light conditions. This Arabidopsis thaliana (Mouse-ear cress) protein is Oxygen-evolving enhancer protein 3-1, chloroplastic (PSBQ1).